The sequence spans 409 residues: Autotransproter heptosyltransferase BAHTCr (409 aa).

Positions 107, 108, and 109 each coordinate ADP-D-glycero-beta-D-manno-heptose. The active-site Proton acceptor is Asp110. ADP-D-glycero-beta-D-manno-heptose-binding residues include Gln224, Thr226, Lys230, Arg257, Gly302, and Glu326. The Fe(3+) site is built by Cys339, Cys342, Cys358, and Cys370.

It belongs to the glycosyltransferase 9 family. In terms of assembly, homododecamer composed of 6 homodimers forming a ring. It depends on Fe(3+) as a cofactor.

The protein localises to the cytoplasm. The enzyme catalyses ADP-D-glycero-beta-D-manno-heptose + L-seryl-[protein] = O-(D-glycero-alpha-D-manno-heptosyl)-L-seryl-[protein] + ADP + H(+). The catalysed reaction is ADP-L-glycero-beta-D-manno-heptose + L-seryl-[protein] = O-(L-glycero-alpha-D-manno-heptosyl)-L-seryl-[protein] + ADP + H(+). Functionally, glycosylates autotransporter CARC. By glycosylating CARC, involved in the colonization of the mouse host gastrointestinal tract. The chain is Autotransproter heptosyltransferase BAHTCr from Citrobacter rodentium (strain ICC168) (Citrobacter freundii biotype 4280).